Reading from the N-terminus, the 285-residue chain is Bifunctional protein FolD (285 aa).

NADP(+) contacts are provided by residues 165–167 (GRS), S190, and I231.

Belongs to the tetrahydrofolate dehydrogenase/cyclohydrolase family. In terms of assembly, homodimer.

It carries out the reaction (6R)-5,10-methylene-5,6,7,8-tetrahydrofolate + NADP(+) = (6R)-5,10-methenyltetrahydrofolate + NADPH. It catalyses the reaction (6R)-5,10-methenyltetrahydrofolate + H2O = (6R)-10-formyltetrahydrofolate + H(+). It participates in one-carbon metabolism; tetrahydrofolate interconversion. Catalyzes the oxidation of 5,10-methylenetetrahydrofolate to 5,10-methenyltetrahydrofolate and then the hydrolysis of 5,10-methenyltetrahydrofolate to 10-formyltetrahydrofolate. In Magnetococcus marinus (strain ATCC BAA-1437 / JCM 17883 / MC-1), this protein is Bifunctional protein FolD.